Reading from the N-terminus, the 745-residue chain is Mediator of RNA polymerase II transcription subunit 25 (745 aa).

An interaction with the Mediator complex region spans residues 1 to 226; that stretch reads MVPGSEGPAR…PRHMVLVRGL (226 aa). The segment covering 233–243 has biased composition (polar residues); sequence SSTSGSLQTKQ. 2 disordered regions span residues 233-266 and 299-374; these read SSTS…QALP and LGPR…VTPG. Residues 252–262 are compositionally biased toward low complexity; the sequence is ASAATLSAAPP. The segment covering 324–342 has biased composition (pro residues); the sequence is PAPPLAPVPPGAPKPPPAS. The tract at residues 389–543 is interaction with VP16; sequence LGGQQSVSNK…VNGIRQVITN (155 aa). The interaction with CREBBP stretch occupies residues 395-545; it reads VSNKLLAWSG…GIRQVITNHK (151 aa). Interaction with RARA stretches follow at residues 563 to 652 and 639 to 705; these read APPV…LLNP and PGAN…WPTQ. The segment at 584 to 738 is disordered; sequence LRAPQPQPQG…PGLQPSVMED (155 aa). Over residues 596–617 the composition is skewed to low complexity; sequence GASAATGQPQPQGATQAPTGAP. A compositionally biased stretch (pro residues) spans 618–631; the sequence is QGPPGAAPGPPPSG. Positions 645–649 match the LXXLL motif motif; the sequence is LRSLL. Over residues 652-663 the composition is skewed to pro residues; sequence PAPPQTGVPPPQ. Arg723 is subject to Asymmetric dimethylarginine.

Belongs to the Mediator complex subunit 25 family. As to quaternary structure, component of the Mediator complex, which is composed of MED1, MED4, MED6, MED7, MED8, MED9, MED10, MED11, MED12, MED13, MED13L, MED14, MED15, MED16, MED17, MED18, MED19, MED20, MED21, MED22, MED23, MED24, MED25, MED26, MED27, MED29, MED30, MED31, CCNC, CDK8 and CDC2L6/CDK11. The MED12, MED13, CCNC and CDK8 subunits form a distinct module termed the CDK8 module. Mediator containing the CDK8 module is less active than Mediator lacking this module in supporting transcriptional activation. Individual preparations of the Mediator complex lacking one or more distinct subunits have been variously termed ARC, CRSP, DRIP, PC2, SMCC and TRAP. Interacts with CREBBP. Interacts with ESR1, GR and THRB in a ligand-dependent fashion. Binds the Herpes simplex virus activator VP16. Interacts with RARA and RXRA in a ligand-dependent fashion.

The protein localises to the nucleus. Its function is as follows. Component of the Mediator complex, a coactivator involved in the regulated transcription of nearly all RNA polymerase II-dependent genes. Mediator functions as a bridge to convey information from gene-specific regulatory proteins to the basal RNA polymerase II transcription machinery. Mediator is recruited to promoters by direct interactions with regulatory proteins and serves as a scaffold for the assembly of a functional preinitiation complex with RNA polymerase II and the general transcription factors. Required for RARA/RXRA-mediated transcription. This is Mediator of RNA polymerase II transcription subunit 25 (Med25) from Mus musculus (Mouse).